We begin with the raw amino-acid sequence, 168 residues long: 2-C-methyl-D-erythritol 2,4-cyclodiphosphate synthase (168 aa).

A divalent metal cation-binding residues include aspartate 8 and histidine 10. Residues 8–10 and 34–35 each bind 4-CDP-2-C-methyl-D-erythritol 2-phosphate; these read DLH and HS. Histidine 42 is a binding site for a divalent metal cation. 4-CDP-2-C-methyl-D-erythritol 2-phosphate contacts are provided by residues 56–58, 61–65, 132–135, and arginine 142; these read DIG, FPDTD, and TTTE.

It belongs to the IspF family. As to quaternary structure, homotrimer. The cofactor is a divalent metal cation.

It catalyses the reaction 4-CDP-2-C-methyl-D-erythritol 2-phosphate = 2-C-methyl-D-erythritol 2,4-cyclic diphosphate + CMP. Its pathway is isoprenoid biosynthesis; isopentenyl diphosphate biosynthesis via DXP pathway; isopentenyl diphosphate from 1-deoxy-D-xylulose 5-phosphate: step 4/6. Functionally, involved in the biosynthesis of isopentenyl diphosphate (IPP) and dimethylallyl diphosphate (DMAPP), two major building blocks of isoprenoid compounds. Catalyzes the conversion of 4-diphosphocytidyl-2-C-methyl-D-erythritol 2-phosphate (CDP-ME2P) to 2-C-methyl-D-erythritol 2,4-cyclodiphosphate (ME-CPP) with a corresponding release of cytidine 5-monophosphate (CMP). This chain is 2-C-methyl-D-erythritol 2,4-cyclodiphosphate synthase, found in Desulfosudis oleivorans (strain DSM 6200 / JCM 39069 / Hxd3) (Desulfococcus oleovorans).